The following is a 281-amino-acid chain: MTQILNAKPVVQAMKENLRQEVAALQAEGKAPTLGIIRVGSRPDDVYYENNIIKNCETIGIATKTYPLDLNISMEEFTAVMTQVNDDPSVHGIMLFRPLPPQLDEEVIKHLISADKDIDCMSPLNLEKVFEGDMSGLLPCTPAAVMAILRHYEIELKGANAVVMGRSLVVGKPLSMMLLQDNATVTICHSRTRNLPEVAKNADIVIAAMGRARMIDDNYVAENSIVIDVGINDAGDGKICGDVDYDAVVDKVKAITPVPGGVGSVTTTILLNNLVRACKSQ.

Residues 165-167 (GRS), serine 190, and isoleucine 231 contribute to the NADP(+) site.

It belongs to the tetrahydrofolate dehydrogenase/cyclohydrolase family. In terms of assembly, homodimer.

The catalysed reaction is (6R)-5,10-methylene-5,6,7,8-tetrahydrofolate + NADP(+) = (6R)-5,10-methenyltetrahydrofolate + NADPH. It carries out the reaction (6R)-5,10-methenyltetrahydrofolate + H2O = (6R)-10-formyltetrahydrofolate + H(+). The protein operates within one-carbon metabolism; tetrahydrofolate interconversion. Its function is as follows. Catalyzes the oxidation of 5,10-methylenetetrahydrofolate to 5,10-methenyltetrahydrofolate and then the hydrolysis of 5,10-methenyltetrahydrofolate to 10-formyltetrahydrofolate. This Desulfitobacterium hafniense (strain Y51) protein is Bifunctional protein FolD 1.